Consider the following 445-residue polypeptide: Argininosuccinate synthase (445 aa).

ATP contacts are provided by residues 17–25 and A43; that span reads AFSGGLDTS. Y99 serves as a coordination point for L-citrulline. ATP-binding residues include G129 and T131. Residues T131, N135, and D136 each contribute to the L-aspartate site. N135 contributes to the L-citrulline binding site. D136 is an ATP binding site. L-citrulline is bound by residues R139 and S192. An ATP-binding site is contributed by D194. T201, E203, and E280 together coordinate L-citrulline.

Belongs to the argininosuccinate synthase family. Type 2 subfamily. Homotetramer.

It is found in the cytoplasm. It carries out the reaction L-citrulline + L-aspartate + ATP = 2-(N(omega)-L-arginino)succinate + AMP + diphosphate + H(+). The protein operates within amino-acid biosynthesis; L-arginine biosynthesis; L-arginine from L-ornithine and carbamoyl phosphate: step 2/3. The sequence is that of Argininosuccinate synthase from Bordetella pertussis (strain Tohama I / ATCC BAA-589 / NCTC 13251).